The sequence spans 250 residues: Isoprenyl transferase (250 aa).

Residue Asp-26 is part of the active site. Asp-26 serves as a coordination point for Mg(2+). Substrate-binding positions include 27-30 (GNGR), Trp-31, Arg-39, His-43, and 71-73 (STE). Asn-74 (proton acceptor) is an active-site residue. Substrate-binding positions include Trp-75, Arg-77, Arg-198, and 204–206 (RLS). Glu-217 is a Mg(2+) binding site.

It belongs to the UPP synthase family. In terms of assembly, homodimer. Requires Mg(2+) as cofactor.

Catalyzes the condensation of isopentenyl diphosphate (IPP) with allylic pyrophosphates generating different type of terpenoids. The protein is Isoprenyl transferase of Streptococcus agalactiae serotype III (strain NEM316).